Consider the following 141-residue polypeptide: Endoribonuclease YbeY (141 aa).

Zn(2+)-binding residues include His107, His111, and His117.

It belongs to the endoribonuclease YbeY family. It depends on Zn(2+) as a cofactor.

It is found in the cytoplasm. Its function is as follows. Single strand-specific metallo-endoribonuclease involved in late-stage 70S ribosome quality control and in maturation of the 3' terminus of the 16S rRNA. This is Endoribonuclease YbeY from Leptospira interrogans serogroup Icterohaemorrhagiae serovar Lai (strain 56601).